The following is a 563-amino-acid chain: Putative ABC transporter ATP-binding protein SCO2324 (563 aa).

In terms of domain architecture, ABC transporter 1 spans 2 to 243 (IRFEDVSVTY…SPVYPPVVGL (242 aa)). 36–43 (GPSGVGKS) contributes to the ATP binding site. The tract at residues 271 to 317 (AGREIPDHTPPPSAPLPAPPAPRPVTSRWRRRGKRPENPSAPTPYAA) is disordered. Pro residues predominate over residues 278–293 (HTPPPSAPLPAPPAPR). The ABC transporter 2 domain maps to 317–545 (AEVRSLAVRR…SPSYAPQVAK (229 aa)). 349 to 356 (GRNGAGKS) provides a ligand contact to ATP.

The protein belongs to the ABC transporter superfamily.

Its subcellular location is the cell membrane. Functionally, probably part of an ABC transporter complex. Responsible for energy coupling to the transport system. This is Putative ABC transporter ATP-binding protein SCO2324 from Streptomyces coelicolor (strain ATCC BAA-471 / A3(2) / M145).